A 157-amino-acid chain; its full sequence is SsrA-binding protein (157 aa).

This sequence belongs to the SmpB family.

It localises to the cytoplasm. Functionally, required for rescue of stalled ribosomes mediated by trans-translation. Binds to transfer-messenger RNA (tmRNA), required for stable association of tmRNA with ribosomes. tmRNA and SmpB together mimic tRNA shape, replacing the anticodon stem-loop with SmpB. tmRNA is encoded by the ssrA gene; the 2 termini fold to resemble tRNA(Ala) and it encodes a 'tag peptide', a short internal open reading frame. During trans-translation Ala-aminoacylated tmRNA acts like a tRNA, entering the A-site of stalled ribosomes, displacing the stalled mRNA. The ribosome then switches to translate the ORF on the tmRNA; the nascent peptide is terminated with the 'tag peptide' encoded by the tmRNA and targeted for degradation. The ribosome is freed to recommence translation, which seems to be the essential function of trans-translation. The polypeptide is SsrA-binding protein (Chlorobium chlorochromatii (strain CaD3)).